The following is a 30-amino-acid chain: Photosystem I reaction center subunit XII (30 aa).

Residues 7–29 (VYTVLLIALLASVLAIRLGSTLY) form a helical membrane-spanning segment.

It belongs to the PsaM family.

It is found in the plastid. Its subcellular location is the chloroplast thylakoid membrane. The protein is Photosystem I reaction center subunit XII of Trieres chinensis (Marine centric diatom).